Here is a 457-residue protein sequence, read N- to C-terminus: DDB1- and CUL4-associated factor 10 (457 aa).

4 WD repeats span residues 65 to 104, 108 to 146, 150 to 189, and 195 to 234; these read RTHG…HIKT, AHED…SKAC, GHTS…EDGC, and FHTR…KSLE. Over residues 246-265 the composition is skewed to low complexity; that stretch reads TASTSDMTSTSSETRPSSSP. The interval 246-304 is disordered; sequence TASTSDMTSTSSETRPSSSPCHNSDSGPLFEKHMSRSSQREGTSPRNSLEVLTPEVPGE. The span at 281-292 shows a compositional bias: polar residues; it reads RSSQREGTSPRN. WD repeat units lie at residues 306 to 346, 368 to 406, and 424 to 457; these read DRGN…QEGT, VGRG…KELV, and SHKD…QPKF.

Belongs to the WD repeat DCAF10 family.

Its pathway is protein modification; protein ubiquitination. Functionally, may function as a substrate receptor for CUL4-DDB1 E3 ubiquitin-protein ligase complex. This is DDB1- and CUL4-associated factor 10 (dcaf10) from Xenopus laevis (African clawed frog).